A 129-amino-acid polypeptide reads, in one-letter code: NADH-quinone oxidoreductase subunit A (129 aa).

A run of 3 helical transmembrane segments spans residues 14 to 34, 67 to 87, and 97 to 117; these read LAIH…VAAV, FLIA…FAWA, and GLIE…YLWI.

Belongs to the complex I subunit 3 family. As to quaternary structure, NDH-1 is composed of 14 different subunits. Subunits NuoA, H, J, K, L, M, N constitute the membrane sector of the complex.

The protein localises to the cell inner membrane. It carries out the reaction a quinone + NADH + 5 H(+)(in) = a quinol + NAD(+) + 4 H(+)(out). NDH-1 shuttles electrons from NADH, via FMN and iron-sulfur (Fe-S) centers, to quinones in the respiratory chain. The immediate electron acceptor for the enzyme in this species is believed to be ubiquinone. Couples the redox reaction to proton translocation (for every two electrons transferred, four hydrogen ions are translocated across the cytoplasmic membrane), and thus conserves the redox energy in a proton gradient. The polypeptide is NADH-quinone oxidoreductase subunit A (Rhodopseudomonas palustris (strain BisB18)).